The sequence spans 328 residues: V-type sodium ATPase subunit C (328 aa).

The protein belongs to the V-ATPase V0D/AC39 subunit family.

Its function is as follows. Involved in ATP-driven sodium extrusion. The sequence is that of V-type sodium ATPase subunit C (ntpC) from Enterococcus hirae (strain ATCC 9790 / DSM 20160 / JCM 8729 / LMG 6399 / NBRC 3181 / NCIMB 6459 / NCDO 1258 / NCTC 12367 / WDCM 00089 / R).